The sequence spans 70 residues: Large ribosomal subunit protein bL28 (70 aa).

Belongs to the bacterial ribosomal protein bL28 family.

The chain is Large ribosomal subunit protein bL28 from Thermosipho melanesiensis (strain DSM 12029 / CIP 104789 / BI429).